Reading from the N-terminus, the 253-residue chain is uncharacterized protein (253 aa).

EamA domains lie at 1–97 (MFFM…IYSL) and 116–237 (FFWA…ISRL). Helical transmembrane passes span 2–22 (FFMALRFLIGGIILLPFAKQL), 28–48 (IFLLSIFTTLSTSFWAYGLLY), 53–73 (ESAVLSYTMPLIAIPLSTLIL), 80–100 (TEVIGILIGFSGVVIYSLNLG), 101–121 (IYFSLIGIVLTLINAFFWALF), 138–158 (AVQLLLGSLIFFTLSPIQFYF), 162–182 (INFLVDLLYVSVLGGGISFYL), and 214–234 (GVNVNIGMIEGIGVMFLGILI).

The protein belongs to the EamA transporter family.

It localises to the cell membrane. This is an uncharacterized protein from Acidianus ambivalens (Desulfurolobus ambivalens).